The following is a 176-amino-acid chain: Inner membrane-spanning protein YciB (176 aa).

Transmembrane regions (helical) follow at residues 22-42 (IYYA…YTWL), 50-70 (VALI…YYHN), 81-101 (IYSL…KPLI), 121-141 (IAWA…AFWL), and 149-169 (FKVF…GIYI).

The protein belongs to the YciB family.

The protein resides in the cell inner membrane. Plays a role in cell envelope biogenesis, maintenance of cell envelope integrity and membrane homeostasis. This chain is Inner membrane-spanning protein YciB, found in Sodalis glossinidius (strain morsitans).